The chain runs to 283 residues: Pantothenate synthetase (283 aa).

ATP is bound at residue 30–37 (MGNLHAGH). The active-site Proton donor is His37. Gln61 is a binding site for (R)-pantoate. Gln61 provides a ligand contact to beta-alanine. Position 149–152 (149–152 (GEKD)) interacts with ATP. Gln155 provides a ligand contact to (R)-pantoate. ATP-binding positions include Leu178 and 186 to 189 (MSSR).

The protein belongs to the pantothenate synthetase family. As to quaternary structure, homodimer.

It localises to the cytoplasm. It catalyses the reaction (R)-pantoate + beta-alanine + ATP = (R)-pantothenate + AMP + diphosphate + H(+). Its pathway is cofactor biosynthesis; (R)-pantothenate biosynthesis; (R)-pantothenate from (R)-pantoate and beta-alanine: step 1/1. In terms of biological role, catalyzes the condensation of pantoate with beta-alanine in an ATP-dependent reaction via a pantoyl-adenylate intermediate. The sequence is that of Pantothenate synthetase from Hahella chejuensis (strain KCTC 2396).